Consider the following 320-residue polypeptide: Beta-sarcoglycan (320 aa).

Low complexity predominate over residues 1 to 10 (MAAAAAAAAA). Residues 1-34 (MAAAAAAAAATEQQGSNGPVKKSMREKAVERRNV) are disordered. Over 1–67 (MAAAAAAAAA…GLRGRKGNLA (67 aa)) the chain is Cytoplasmic. Over residues 23-34 (SMREKAVERRNV) the composition is skewed to basic and acidic residues. A helical; Signal-anchor for type II membrane protein transmembrane segment spans residues 68–88 (ICVIVLLFILAVINLLITLVI). Residues 89–320 (WAVIRIGPNG…VSDNPCGNTH (232 aa)) lie on the Extracellular side of the membrane. N160, N213, and N260 each carry an N-linked (GlcNAc...) asparagine glycan. Intrachain disulfides connect C290/C316 and C292/C309.

Belongs to the sarcoglycan beta/delta/gamma/zeta family. Cross-link to form 2 major subcomplexes: one consisting of SGCB, SGCD and SGCG and the other consisting of SGCB and SGCD. The association between SGCB and SGCG is particularly strong while SGCA is loosely associated with the other sarcoglycans. In terms of processing, disulfide bonds are present. In terms of tissue distribution, most strongly expressed in skeletal and heart muscle. Also detected in proliferating myoblasts.

The protein localises to the cell membrane. It localises to the sarcolemma. It is found in the cytoplasm. The protein resides in the cytoskeleton. Functionally, component of the sarcoglycan complex, a subcomplex of the dystrophin-glycoprotein complex which forms a link between the F-actin cytoskeleton and the extracellular matrix. This is Beta-sarcoglycan (Sgcb) from Mus musculus (Mouse).